Consider the following 516-residue polypeptide: Coiled-coil domain-containing protein 82 (516 aa).

Residues 1-13 (MVHARRHETRKNS) show a composition bias toward basic residues. The interval 1–265 (MVHARRHETR…DYGDAENEDD (265 aa)) is disordered. The span at 38 to 62 (DSDEELDSDEEIGSDEDLDGGESID) shows a compositional bias: acidic residues. Positions 78–96 (IPEKETELNLIKVESERSN) are enriched in basic and acidic residues. Over residues 98 to 107 (KCHMNTSSSS) the composition is skewed to polar residues. Residues 113–135 (MNKTKHNDLPDDEAHPGQAEGHH) show a composition bias toward basic and acidic residues. A phosphoserine mark is found at Ser170 and Ser194. Thr202 carries the post-translational modification Phosphothreonine. Residues 204-232 (EKSPAARKREYHQKLQELCERSRQKQRHN) are a coiled coil. A compositionally biased stretch (basic and acidic residues) spans 215 to 226 (HQKLQELCERSR). Over residues 248–265 (TDEDEDDDDYGDAENEDD) the composition is skewed to acidic residues. A Phosphoserine modification is found at Ser301.

In Rattus norvegicus (Rat), this protein is Coiled-coil domain-containing protein 82 (Ccdc82).